Reading from the N-terminus, the 135-residue chain is Ribosome-binding factor A (135 aa).

It belongs to the RbfA family. Monomer. Binds 30S ribosomal subunits, but not 50S ribosomal subunits or 70S ribosomes.

It localises to the cytoplasm. Functionally, one of several proteins that assist in the late maturation steps of the functional core of the 30S ribosomal subunit. Associates with free 30S ribosomal subunits (but not with 30S subunits that are part of 70S ribosomes or polysomes). Required for efficient processing of 16S rRNA. May interact with the 5'-terminal helix region of 16S rRNA. This Dinoroseobacter shibae (strain DSM 16493 / NCIMB 14021 / DFL 12) protein is Ribosome-binding factor A.